The following is a 220-amino-acid chain: ATP-dependent Clp protease proteolytic subunit (220 aa).

Residue Ser-122 is the Nucleophile of the active site. Residue His-147 is part of the active site.

Belongs to the peptidase S14 family. Fourteen ClpP subunits assemble into 2 heptameric rings which stack back to back to give a disk-like structure with a central cavity, resembling the structure of eukaryotic proteasomes.

The protein resides in the cytoplasm. It carries out the reaction Hydrolysis of proteins to small peptides in the presence of ATP and magnesium. alpha-casein is the usual test substrate. In the absence of ATP, only oligopeptides shorter than five residues are hydrolyzed (such as succinyl-Leu-Tyr-|-NHMec, and Leu-Tyr-Leu-|-Tyr-Trp, in which cleavage of the -Tyr-|-Leu- and -Tyr-|-Trp bonds also occurs).. Functionally, cleaves peptides in various proteins in a process that requires ATP hydrolysis. Has a chymotrypsin-like activity. Plays a major role in the degradation of misfolded proteins. The protein is ATP-dependent Clp protease proteolytic subunit of Colwellia psychrerythraea (strain 34H / ATCC BAA-681) (Vibrio psychroerythus).